A 207-amino-acid polypeptide reads, in one-letter code: Ubiquinol-cytochrome c reductase iron-sulfur subunit (207 aa).

The chain crosses the membrane as a helical span at residues 24 to 44 (LVAATSVVGAVGAGYALVPFV). In terms of domain architecture, Rieske spans 100–199 (PKLVDPTSEV…HVYLNDTTIL (100 aa)). [2Fe-2S] cluster contacts are provided by cysteine 134, histidine 136, cysteine 162, and histidine 165. Cysteine 139 and cysteine 164 are disulfide-bonded.

The main subunits of complex b-c1 are: cytochrome b, cytochrome c1 and the Rieske protein. The cofactor is [2Fe-2S] cluster.

Its subcellular location is the cell membrane. The catalysed reaction is a quinol + 2 Fe(III)-[cytochrome c](out) = a quinone + 2 Fe(II)-[cytochrome c](out) + 2 H(+)(out). Functionally, component of the ubiquinol-cytochrome c reductase complex (complex III or cytochrome b-c1 complex), which is a respiratory chain that generates an electrochemical potential coupled to ATP synthesis. The protein is Ubiquinol-cytochrome c reductase iron-sulfur subunit (petA) of Allochromatium vinosum (strain ATCC 17899 / DSM 180 / NBRC 103801 / NCIMB 10441 / D) (Chromatium vinosum).